The primary structure comprises 146 residues: Large ribosomal subunit protein bL21 (146 aa).

Residues 115 to 146 form a disordered region; the sequence is KSISLGKSAPKSSAKKETVKKETKPKSEKSTN. Over residues 128 to 146 the composition is skewed to basic and acidic residues; that stretch reads AKKETVKKETKPKSEKSTN.

It belongs to the bacterial ribosomal protein bL21 family. Part of the 50S ribosomal subunit. Contacts protein L20.

In terms of biological role, this protein binds to 23S rRNA in the presence of protein L20. The sequence is that of Large ribosomal subunit protein bL21 from Prochlorococcus marinus (strain MIT 9312).